A 154-amino-acid chain; its full sequence is Iron-sulfur cluster assembly enzyme IscU (154 aa).

Belongs to the NifU family. As to quaternary structure, component of the mitochondrial core iron-sulfur cluster (ISC) assembly complex at least composed of the cystein desulfurase Nfs1, the scaffold protein IscU, the accessory protein bcn92/Isd11/Lyrm4, and probably fh/frataxin. Interacts with Nfs1. Requires Fe(2+) as cofactor. The cofactor is [2Fe-2S] cluster.

Its pathway is cofactor biosynthesis; iron-sulfur cluster biosynthesis. In terms of biological role, scaffold protein for the de novo synthesis of iron-sulfur (Fe-S) clusters within mitochondria, which is required for maturation of both mitochondrial and cytoplasmic [2Fe-2S] and [4Fe-4S] proteins. Component of the mitochondrial core iron-sulfur cluster (ISC) assembly complex; regulates its activity. The sequence is that of Iron-sulfur cluster assembly enzyme IscU from Drosophila melanogaster (Fruit fly).